Consider the following 138-residue polypeptide: Large ribosomal subunit protein eL32 (138 aa).

Belongs to the eukaryotic ribosomal protein eL32 family.

This Saccharolobus islandicus (strain Y.N.15.51 / Yellowstone #2) (Sulfolobus islandicus) protein is Large ribosomal subunit protein eL32.